Consider the following 580-residue polypeptide: Multidrug resistance-like ATP-binding protein MdlB (580 aa).

Positions 25 to 310 (LILAFIFLLS…ITIQQSVLQQ (286 aa)) constitute an ABC transmembrane type-1 domain. The next 6 membrane-spanning stretches (helical) occupy residues 26-46 (ILAF…PILI), 61-81 (LLII…SVFL), 150-170 (IILI…MALV), 173-193 (FILP…TPLL), 247-267 (LDGF…LCNF), and 268-288 (MFLF…YAFI). The ABC transporter domain maps to 341–575 (INIQNVSFYH…KSCYYKMYKF (235 aa)). 375–382 (GHTGSGKS) provides a ligand contact to ATP.

Belongs to the ABC transporter superfamily. Drug exporter-2 (TC 3.A.1.117) family.

Its subcellular location is the cell membrane. It catalyses the reaction ATP + H2O + xenobioticSide 1 = ADP + phosphate + xenobioticSide 2.. The polypeptide is Multidrug resistance-like ATP-binding protein MdlB (mdlB) (Buchnera aphidicola subsp. Acyrthosiphon pisum (strain APS) (Acyrthosiphon pisum symbiotic bacterium)).